A 307-amino-acid chain; its full sequence is MPINVPDGLPAAEILTKEDVFIMEEKRAEHQDIRPLSIVILNLMPNKIITETQILRLLGNSPLQVDITLLYPETHRSKNTPEEYLIKYYQTFDSIKDQKFDGMIITGAPIEQMPFEEVDFWPELQKIMDWSKANVFSTLFICWGAQAGLYHFFGVPKYPLPAKMFGVFPHTLNRRDIRLLRGFDDIFYVPHSRHTEVRKEDIVKVPELEILSESEESGVYLVGTKGGRQIFVTGHSEYDPYTLKAEYDRDISYELPINVPQNYYPGDDPRQTPVVRWRGHSNLLFANWLNYYVYQETPYNLEELGNR.

The active-site Acyl-thioester intermediate is Cys142. Substrate is bound by residues Lys163 and Ser192. His235 functions as the Proton acceptor in the catalytic mechanism. Glu237 is a catalytic residue. Arg249 is a binding site for substrate.

Belongs to the MetA family.

It localises to the cytoplasm. It catalyses the reaction L-homoserine + acetyl-CoA = O-acetyl-L-homoserine + CoA. Its pathway is amino-acid biosynthesis; L-methionine biosynthesis via de novo pathway; O-acetyl-L-homoserine from L-homoserine: step 1/1. Its function is as follows. Transfers an acetyl group from acetyl-CoA to L-homoserine, forming acetyl-L-homoserine. In Desulfitobacterium hafniense (strain DSM 10664 / DCB-2), this protein is Homoserine O-acetyltransferase.